Here is a 322-residue protein sequence, read N- to C-terminus: Mas-related G-protein coupled receptor member B5 (322 aa).

The Extracellular portion of the chain corresponds to 1-34 (MGLTTPAWNINNTVVNGSNNTEHFSCVSKFNTLN). N-linked (GlcNAc...) asparagine glycans are attached at residues N11, N16, and N19. Residues 35–55 (FLTVIIAMFGLAGNAIVLWLL) traverse the membrane as a helical segment. Over 56-70 (AFHLPRNAFSVYVCN) the chain is Cytoplasmic. The chain crosses the membrane as a helical span at residues 71–91 (LACADFLQLCTQILGSLECFL). The Extracellular segment spans residues 92-98 (QLNRRHT). A helical transmembrane segment spans residues 99 to 119 (FFLTVVFMFAYLAGLCMIAAI). Residues 120–147 (SVERSLSVMWPIWYHCQRPRHTSSIMCA) are Cytoplasmic-facing. Residues 148 to 168 (LLWAFCLLLNFLLGEGCGLLF) traverse the membrane as a helical segment. Over 169–172 (SDPK) the chain is Extracellular. Residues 173-193 (YYFCITCALITTALIILLTVV) traverse the membrane as a helical segment. Over 194–216 (PSVSSLALLVKMICGSHRIPVTR) the chain is Cytoplasmic. Residues 217-237 (FYVTIALTLVVFIFLGLPFGI) form a helical membrane-spanning segment. The Extracellular segment spans residues 238 to 260 (YSSFLIMFKEFQSIFSYHVLEVT). Residues 261–281 (IFLSCVNSCANPIIYFLVGSI) traverse the membrane as a helical segment. Over 282–322 (RQHRLQWQSLKLLLQRAMQDTPEEDSGERVPSQRSGELESV) the chain is Cytoplasmic. The disordered stretch occupies residues 302-322 (TPEEDSGERVPSQRSGELESV).

This sequence belongs to the G-protein coupled receptor 1 family. Mas subfamily.

It localises to the membrane. In terms of biological role, orphan receptor. Probably involved in the function of nociceptive neurons. May regulate nociceptor function and/or development, including the sensation or modulation of pain. The protein is Mas-related G-protein coupled receptor member B5 (Mrgprb5) of Mus musculus (Mouse).